A 431-amino-acid chain; its full sequence is Serine--tRNA ligase (431 aa).

237 to 239 lines the L-serine pocket; sequence TAE. 268–270 lines the ATP pocket; that stretch reads RSE. Glu-291 serves as a coordination point for L-serine. Residue 355–358 coordinates ATP; sequence EISS. Ser-390 contacts L-serine.

This sequence belongs to the class-II aminoacyl-tRNA synthetase family. Type-1 seryl-tRNA synthetase subfamily. As to quaternary structure, homodimer. The tRNA molecule binds across the dimer.

It is found in the cytoplasm. The catalysed reaction is tRNA(Ser) + L-serine + ATP = L-seryl-tRNA(Ser) + AMP + diphosphate + H(+). The enzyme catalyses tRNA(Sec) + L-serine + ATP = L-seryl-tRNA(Sec) + AMP + diphosphate + H(+). It participates in aminoacyl-tRNA biosynthesis; selenocysteinyl-tRNA(Sec) biosynthesis; L-seryl-tRNA(Sec) from L-serine and tRNA(Sec): step 1/1. Functionally, catalyzes the attachment of serine to tRNA(Ser). Is also able to aminoacylate tRNA(Sec) with serine, to form the misacylated tRNA L-seryl-tRNA(Sec), which will be further converted into selenocysteinyl-tRNA(Sec). This is Serine--tRNA ligase from Neisseria gonorrhoeae (strain ATCC 700825 / FA 1090).